Here is an 875-residue protein sequence, read N- to C-terminus: Leucine--tRNA ligase (875 aa).

Residues 57-67 (PYPSGQIHMGH) carry the 'HIGH' region motif. The short motif at 631–635 (KMSKS) is the 'KMSKS' region element. Lysine 634 serves as a coordination point for ATP.

Belongs to the class-I aminoacyl-tRNA synthetase family.

It is found in the cytoplasm. The enzyme catalyses tRNA(Leu) + L-leucine + ATP = L-leucyl-tRNA(Leu) + AMP + diphosphate. This chain is Leucine--tRNA ligase, found in Granulibacter bethesdensis (strain ATCC BAA-1260 / CGDNIH1).